The primary structure comprises 291 residues: Deaminated glutathione amidase (291 aa).

Residues 13–268 form the CN hydrolase domain; it reads KRIGLGQITS…NDIAFVDIDL (256 aa). Catalysis depends on E52, which acts as the Proton acceptor. The Proton donor role is filled by K130. The active-site Nucleophile is C172.

Belongs to the carbon-nitrogen hydrolase superfamily. NIT1/NIT2 family.

It catalyses the reaction N-(4-oxoglutaryl)-L-cysteinylglycine + H2O = L-cysteinylglycine + 2-oxoglutarate. Catalyzes the hydrolysis of the amide bond in N-(4-oxoglutarate)-L-cysteinylglycine (deaminated glutathione), a metabolite repair reaction to dispose of the harmful deaminated glutathione. This is Deaminated glutathione amidase (nit1-1) from Dictyostelium discoideum (Social amoeba).